A 266-amino-acid chain; its full sequence is MRKNTYAMRYVAGQPAERILPLGSFASIGQALPAGEPLSSEERIRILVWNIFKQQRAEWLSVLKNYGKDAHLVLLQEAQTTPELVQFATANYLAADQVPAFVLPQHPSGVMTLSAAHPVYCCPLREREPILRLAKSALVTVYPLPDTRLLMVVNVHAVNFSLGVDVYSKQLLPIGDQIAHHSGPVIMAGDFNAWSRPRMNALYRFAREMSLRQVRFTDDQRRRAFGRPLDFVFYRGLNVNEASVLVTRASDHNPLLVEFSPGKPEQ.

The protein belongs to the UPF0294 family.

It localises to the cytoplasm. The chain is UPF0294 protein YafD from Salmonella typhi.